The primary structure comprises 246 residues: 4-hydroxy-tetrahydrodipicolinate reductase (246 aa).

NAD(+) contacts are provided by residues 8-13 (GISGRM), 75-77 (GTT), and 99-102 (ASNY). The active-site Proton donor/acceptor is His132. Residue His133 coordinates (S)-2,3,4,5-tetrahydrodipicolinate. The active-site Proton donor is the Lys136. A (S)-2,3,4,5-tetrahydrodipicolinate-binding site is contributed by 142-143 (GT).

The protein belongs to the DapB family.

It is found in the cytoplasm. It carries out the reaction (S)-2,3,4,5-tetrahydrodipicolinate + NAD(+) + H2O = (2S,4S)-4-hydroxy-2,3,4,5-tetrahydrodipicolinate + NADH + H(+). It catalyses the reaction (S)-2,3,4,5-tetrahydrodipicolinate + NADP(+) + H2O = (2S,4S)-4-hydroxy-2,3,4,5-tetrahydrodipicolinate + NADPH + H(+). The protein operates within amino-acid biosynthesis; L-lysine biosynthesis via DAP pathway; (S)-tetrahydrodipicolinate from L-aspartate: step 4/4. In terms of biological role, catalyzes the conversion of 4-hydroxy-tetrahydrodipicolinate (HTPA) to tetrahydrodipicolinate. The polypeptide is 4-hydroxy-tetrahydrodipicolinate reductase (Akkermansia muciniphila (strain ATCC BAA-835 / DSM 22959 / JCM 33894 / BCRC 81048 / CCUG 64013 / CIP 107961 / Muc)).